A 142-amino-acid chain; its full sequence is Large ribosomal subunit protein uL13 (142 aa).

This sequence belongs to the universal ribosomal protein uL13 family. Part of the 50S ribosomal subunit.

Functionally, this protein is one of the early assembly proteins of the 50S ribosomal subunit, although it is not seen to bind rRNA by itself. It is important during the early stages of 50S assembly. The polypeptide is Large ribosomal subunit protein uL13 (Hydrogenovibrio crunogenus (strain DSM 25203 / XCL-2) (Thiomicrospira crunogena)).